Consider the following 105-residue polypeptide: Integration host factor (105 aa).

The short motif at 64-71 is the H2TH motif, binds DNA element; the sequence is LPKVGKVK. Residues 82–94 are lid, binds DNA; it reads APTRRLRGLGDRQ.

Belongs to the actinobacterial IHF (aIHF) family. In terms of assembly, binds DNA as a monomer. As to quaternary structure, (Microbial infection) Forms a complex with L5 Int and attP DNA. The complex binds attB to form products.

Its subcellular location is the cytoplasm. It is found in the nucleoid. Its function is as follows. A nucleoid-associated protein (NAP) that binds DNA without any sequence specificity. Compacts DNA. Binds along the whole chromosome in a dynamic manner, has equal affinity for the oriC site, attB and a randon 62% GC-rich sequence. Plays a role in transcription regulation. Functionally, (Microbial infection) Stimulates temperate Mycobacterium phage L5 Int-mediated recombination in vitro using supercoiled attP (phage attachment site) DNA, linear attB DNA (bacterial attachment site) and L5 integrase (L5 Int or Int-L5, AC P22884). mIHF acts on L5 Int to stimulate formation of a specific intasome complex. mIHF probably stabilizes a sharp bend in the DNA during phage integration. The polypeptide is Integration host factor (Mycolicibacterium smegmatis (strain ATCC 700084 / mc(2)155) (Mycobacterium smegmatis)).